The chain runs to 392 residues: Phospho-N-acetylmuramoyl-pentapeptide-transferase (392 aa).

10 helical membrane-spanning segments follow: residues 29-49 (AVLAALTALLIGLAAGSWVIG), 76-96 (TMGGVLILLSIALSTLLWFDL), 100-120 (FVWIVLLVTLGFGAIGWVDDW), 137-157 (YLWQSLIGLMAALYLVFCISE), 192-212 (AVSYPLGVLGFVLLTYLVIVG), 225-245 (GLAIMPVVMVGSALGVFAYVT), 262-282 (SGELLIFCAAMAGAGLAFLWF), 289-309 (VFMGDVGALALGAALGTIAII), 314-334 (IVLAVMGGIFVAEALSVMLQV), and 369-389 (QVVVRFWIITMLLCLVGLSTL).

The protein belongs to the glycosyltransferase 4 family. MraY subfamily. It depends on Mg(2+) as a cofactor.

The protein localises to the cell inner membrane. It carries out the reaction UDP-N-acetyl-alpha-D-muramoyl-L-alanyl-gamma-D-glutamyl-meso-2,6-diaminopimeloyl-D-alanyl-D-alanine + di-trans,octa-cis-undecaprenyl phosphate = di-trans,octa-cis-undecaprenyl diphospho-N-acetyl-alpha-D-muramoyl-L-alanyl-D-glutamyl-meso-2,6-diaminopimeloyl-D-alanyl-D-alanine + UMP. It functions in the pathway cell wall biogenesis; peptidoglycan biosynthesis. Catalyzes the initial step of the lipid cycle reactions in the biosynthesis of the cell wall peptidoglycan: transfers peptidoglycan precursor phospho-MurNAc-pentapeptide from UDP-MurNAc-pentapeptide onto the lipid carrier undecaprenyl phosphate, yielding undecaprenyl-pyrophosphoryl-MurNAc-pentapeptide, known as lipid I. This is Phospho-N-acetylmuramoyl-pentapeptide-transferase from Verminephrobacter eiseniae (strain EF01-2).